The sequence spans 730 residues: PWWP domain-containing protein 2A (730 aa).

Over residues 1–15 (MAAVAAEAAATAASP) the composition is skewed to low complexity. A disordered region spans residues 1 to 134 (MAAVAAEAAA…PPAGGDSAVS (134 aa)). Positions 66-77 (PLPPPPPPPPPG) are enriched in pro residues. Residues Ser-82 and Ser-99 each carry the phosphoserine modification. Over residues 91–108 (PEPAAVPVSPPEQPPAAP) the composition is skewed to pro residues. The tract at residues 128 to 346 (GGDSAVSHLI…KLKTDHKVDG (219 aa)) is interaction with HDAC1 and MTA1. A Glycyl lysine isopeptide (Lys-Gly) (interchain with G-Cter in SUMO2) cross-link involves residue Lys-188. Disordered regions lie at residues 257–276 (YNQSIPQPPPRKIKRPKRKM), 311–355 (IRKG…SQRR), and 409–531 (KEKA…LGKK). Residues 267–276 (RKIKRPKRKM) show a composition bias toward basic residues. Basic and acidic residues-rich tracts occupy residues 311-329 (IRKGSSDSSRYEDKKRRND) and 341-354 (DHKVDGKNQNESQR). An interaction with the H2A.Z/H2AZ1 region spans residues 396–547 (MDHAKAREVL…SVYLTLNQET (152 aa)). Residues 488 to 501 (SAGEAPSEKPSPSE) show a composition bias toward low complexity. Basic and acidic residues predominate over residues 512–527 (DTSRVRVPGEQEELRM). Residues 630-690 (VGDIVWAKIY…LSQLSPFLEN (61 aa)) form the PWWP domain.

In terms of assembly, component of a MTA1-specific subcomplex of the NuRD complex (M1HR), which is composed of PWWP2A, MTA1/2, HDAC1/2, and RBBP4/7 but does not contain CHD4 and MBD3. Interacts with MTA1; the interaction mediates the association of PWWP2A with the M1HR complex. Interacts with H2A.Z/H2AZ1. Interacts (via PWWP domain) with histone H3 trimethylated at 'Lys-36' (H3K36me3). Does not interact with CHD4 and MBD3.

The protein localises to the nucleus. Functionally, chromatin-binding protein that acts as an adapter between distinct nucleosome components (H3K36me3 or H2A.Z) and chromatin-modifying complexes, contributing to the regulation of the levels of histone acetylation at actively transcribed genes. Competes with CHD4 and MBD3 for interaction with MTA1 to form a NuRD subcomplex, preventing the formation of full NuRD complex (containing CHD4 and MBD3), leading to recruitment of HDACs to gene promoters resulting in turn in the deacetylation of nearby H3K27 and H2A.Z. Plays a role in facilitating transcriptional elongation and repression of spurious transcription initiation through regulation of histone acetylation. Essential for proper mitosis progression. This is PWWP domain-containing protein 2A (Pwwp2a) from Mus musculus (Mouse).